A 209-amino-acid chain; its full sequence is uncharacterized protein (209 aa).

The region spanning 1-199 (MQVFLDLDET…DELKRVTASL (199 aa)) is the FCP1 homology domain.

This is an uncharacterized protein from Dryophytes versicolor (chameleon treefrog).